The following is a 316-amino-acid chain: 4-hydroxy-3-methylbut-2-enyl diphosphate reductase (316 aa).

Cys-12 is a [4Fe-4S] cluster binding site. Residues His-43 and His-81 each contribute to the (2E)-4-hydroxy-3-methylbut-2-enyl diphosphate site. Dimethylallyl diphosphate contacts are provided by His-43 and His-81. Residues His-43 and His-81 each contribute to the isopentenyl diphosphate site. Position 103 (Cys-103) interacts with [4Fe-4S] cluster. Position 131 (His-131) interacts with (2E)-4-hydroxy-3-methylbut-2-enyl diphosphate. A dimethylallyl diphosphate-binding site is contributed by His-131. Residue His-131 participates in isopentenyl diphosphate binding. Residue Glu-133 is the Proton donor of the active site. Residue Thr-170 coordinates (2E)-4-hydroxy-3-methylbut-2-enyl diphosphate. Residue Cys-198 coordinates [4Fe-4S] cluster. 3 residues coordinate (2E)-4-hydroxy-3-methylbut-2-enyl diphosphate: Ser-226, Asn-228, and Ser-271. Dimethylallyl diphosphate is bound by residues Ser-226, Asn-228, and Ser-271. Isopentenyl diphosphate-binding residues include Ser-226, Asn-228, and Ser-271.

It belongs to the IspH family. Requires [4Fe-4S] cluster as cofactor.

The enzyme catalyses isopentenyl diphosphate + 2 oxidized [2Fe-2S]-[ferredoxin] + H2O = (2E)-4-hydroxy-3-methylbut-2-enyl diphosphate + 2 reduced [2Fe-2S]-[ferredoxin] + 2 H(+). The catalysed reaction is dimethylallyl diphosphate + 2 oxidized [2Fe-2S]-[ferredoxin] + H2O = (2E)-4-hydroxy-3-methylbut-2-enyl diphosphate + 2 reduced [2Fe-2S]-[ferredoxin] + 2 H(+). It functions in the pathway isoprenoid biosynthesis; dimethylallyl diphosphate biosynthesis; dimethylallyl diphosphate from (2E)-4-hydroxy-3-methylbutenyl diphosphate: step 1/1. It participates in isoprenoid biosynthesis; isopentenyl diphosphate biosynthesis via DXP pathway; isopentenyl diphosphate from 1-deoxy-D-xylulose 5-phosphate: step 6/6. In terms of biological role, catalyzes the conversion of 1-hydroxy-2-methyl-2-(E)-butenyl 4-diphosphate (HMBPP) into a mixture of isopentenyl diphosphate (IPP) and dimethylallyl diphosphate (DMAPP). Acts in the terminal step of the DOXP/MEP pathway for isoprenoid precursor biosynthesis. This Bacillus cereus (strain AH820) protein is 4-hydroxy-3-methylbut-2-enyl diphosphate reductase.